A 366-amino-acid polypeptide reads, in one-letter code: MPDPRDLQLSSYDYPLPPERIAQAPVEPRHSARLLMVPPQGEPSTDAAHGQVWDLLEQLQPGDLLVVNDTRVLKARLAVRRSGGGLSELLVLEPRGEGRWLCLARPAKRMRPGDILTIDGSTSISLTVLAEDPASGGRLVQFPSDCRDAETIEGLLNDVGEVPLPPYIERHDPSDSQRYQTRYADRPGAVAAPTAGLHFSDELLAGLQQKGVDLARITLHVGLGTFRPVETEDLTALELHSEWVDVSPAVVEAVQACRGRVIAVGTTSVRALEGAAQAHGGVLKPYTGPVDLVIQPGYRFAVVQGLLTNFHLPKSSLLLLVSALIGREKLLELYHEAIERDYRFFSYGDAMWIAPEVVLPEVQPRP.

It belongs to the QueA family. As to quaternary structure, monomer.

The protein resides in the cytoplasm. It catalyses the reaction 7-aminomethyl-7-carbaguanosine(34) in tRNA + S-adenosyl-L-methionine = epoxyqueuosine(34) in tRNA + adenine + L-methionine + 2 H(+). The protein operates within tRNA modification; tRNA-queuosine biosynthesis. Its function is as follows. Transfers and isomerizes the ribose moiety from AdoMet to the 7-aminomethyl group of 7-deazaguanine (preQ1-tRNA) to give epoxyqueuosine (oQ-tRNA). The polypeptide is S-adenosylmethionine:tRNA ribosyltransferase-isomerase (Synechococcus sp. (strain CC9605)).